A 566-amino-acid chain; its full sequence is Oxygen-dependent choline dehydrogenase (566 aa).

7-36 provides a ligand contact to FAD; it reads DYIICGAGSAGNVLATRLTEDPNVTVLLLE. Residues 182 to 204 are disordered; the sequence is YQQEGFGPMDRTVTPKGRRASTA. His-474 (proton acceptor) is an active-site residue.

Belongs to the GMC oxidoreductase family. FAD is required as a cofactor.

The catalysed reaction is choline + A = betaine aldehyde + AH2. It carries out the reaction betaine aldehyde + NAD(+) + H2O = glycine betaine + NADH + 2 H(+). It functions in the pathway amine and polyamine biosynthesis; betaine biosynthesis via choline pathway; betaine aldehyde from choline (cytochrome c reductase route): step 1/1. Involved in the biosynthesis of the osmoprotectant glycine betaine. Catalyzes the oxidation of choline to betaine aldehyde and betaine aldehyde to glycine betaine at the same rate. In Burkholderia multivorans (strain ATCC 17616 / 249), this protein is Oxygen-dependent choline dehydrogenase.